The chain runs to 525 residues: DNA polymerase epsilon subunit 2 (525 aa).

Belongs to the DNA polymerase epsilon subunit B family. Component of the epsilon DNA polymerase complex consisting of four subunits: the catalytic subunit PolE1/DNApol-epsilon255 and the accessory subunits PolE2/DNApol-epsilon58, Chrac-14/DNApolE3 and PolE4.

The protein resides in the nucleus. Functionally, accessory component of the DNA polymerase epsilon complex. Participates in DNA repair and in chromosomal DNA replication. Has a role in the entrance and progression through S phase. Has a role in endoreplication. Essential for viability and tissue development. This Drosophila melanogaster (Fruit fly) protein is DNA polymerase epsilon subunit 2.